The following is a 305-amino-acid chain: Acyl transferase (305 aa).

Active-site charge relay system residues include Ser114, Asp211, and His241.

Belongs to the LuxD family.

It functions in the pathway lipid metabolism; fatty acid reduction for biolumincescence. Its function is as follows. Acyl transferase is part of the fatty acid reductase system required for aldehyde biosynthesis; it produces fatty acids for the luminescent reaction. The protein is Acyl transferase (luxD) of Vibrio harveyi (Beneckea harveyi).